Here is a 759-residue protein sequence, read N- to C-terminus: Xaa-Pro dipeptidyl-peptidase (759 aa).

Catalysis depends on charge relay system residues serine 347, aspartate 467, and histidine 497.

Belongs to the peptidase S15 family. In terms of assembly, homodimer.

The protein resides in the cytoplasm. The enzyme catalyses Hydrolyzes Xaa-Pro-|- bonds to release unblocked, N-terminal dipeptides from substrates including Ala-Pro-|-p-nitroanilide and (sequentially) Tyr-Pro-|-Phe-Pro-|-Gly-Pro-|-Ile.. Its function is as follows. Removes N-terminal dipeptides sequentially from polypeptides having unsubstituted N-termini provided that the penultimate residue is proline. This is Xaa-Pro dipeptidyl-peptidase from Streptococcus gordonii (strain Challis / ATCC 35105 / BCRC 15272 / CH1 / DL1 / V288).